The primary structure comprises 364 residues: Ferrochelatase (364 aa).

Fe cation is bound by residues histidine 213 and glutamate 294.

Belongs to the ferrochelatase family.

It is found in the cytoplasm. It catalyses the reaction heme b + 2 H(+) = protoporphyrin IX + Fe(2+). The protein operates within porphyrin-containing compound metabolism; protoheme biosynthesis; protoheme from protoporphyrin-IX: step 1/1. Its function is as follows. Catalyzes the ferrous insertion into protoporphyrin IX. This chain is Ferrochelatase, found in Chromobacterium violaceum (strain ATCC 12472 / DSM 30191 / JCM 1249 / CCUG 213 / NBRC 12614 / NCIMB 9131 / NCTC 9757 / MK).